The chain runs to 506 residues: Aluminum-activated malate transporter 7 (506 aa).

The next 6 membrane-spanning stretches (helical) occupy residues 28–48, 52–72, 78–98, 104–124, 130–150, and 166–186; these read VGLV…YDSF, AMWA…ATLG, VAAT…ASMS, PILL…VRFF, RYDY…VSGF, and VIIG…VWAG. The segment at 461–485 is disordered; it reads DDGNNDDTSKNDNGSKEVSIHEKHE. A compositionally biased stretch (basic and acidic residues) spans 467 to 485; sequence DTSKNDNGSKEVSIHEKHE.

Belongs to the aromatic acid exporter (TC 2.A.85) family.

The protein localises to the membrane. Functionally, malate transporter. This Arabidopsis thaliana (Mouse-ear cress) protein is Aluminum-activated malate transporter 7 (ALMT7).